We begin with the raw amino-acid sequence, 314 residues long: DNA-directed RNA polymerase subunit alpha (314 aa).

The segment at Met-1–Thr-228 is alpha N-terminal domain (alpha-NTD). The tract at residues Asp-240–Thr-314 is alpha C-terminal domain (alpha-CTD).

It belongs to the RNA polymerase alpha chain family. In cyanobacteria the RNAP catalytic core is composed of 2 alpha, 1 beta, 1 beta', 1 gamma and 1 omega subunit. When a sigma factor is associated with the core the holoenzyme is formed, which can initiate transcription.

It catalyses the reaction RNA(n) + a ribonucleoside 5'-triphosphate = RNA(n+1) + diphosphate. In terms of biological role, DNA-dependent RNA polymerase catalyzes the transcription of DNA into RNA using the four ribonucleoside triphosphates as substrates. The chain is DNA-directed RNA polymerase subunit alpha from Trichodesmium erythraeum (strain IMS101).